The primary structure comprises 355 residues: Histidinol-phosphate aminotransferase (355 aa).

An N6-(pyridoxal phosphate)lysine modification is found at K214.

This sequence belongs to the class-II pyridoxal-phosphate-dependent aminotransferase family. Histidinol-phosphate aminotransferase subfamily. Homodimer. It depends on pyridoxal 5'-phosphate as a cofactor.

The catalysed reaction is L-histidinol phosphate + 2-oxoglutarate = 3-(imidazol-4-yl)-2-oxopropyl phosphate + L-glutamate. It functions in the pathway amino-acid biosynthesis; L-histidine biosynthesis; L-histidine from 5-phospho-alpha-D-ribose 1-diphosphate: step 7/9. This is Histidinol-phosphate aminotransferase (hisC) from Buchnera aphidicola subsp. Schizaphis graminum (strain Sg).